Consider the following 453-residue polypeptide: Tryptophan dimethylallyltransferase cnsF (453 aa).

Residues 84–85 and Glu93 contribute to the L-tryptophan site; that span reads IL. Arg104, Lys190, and Tyr192 together coordinate substrate. Residues Tyr194 and Arg248 each contribute to the L-tryptophan site. Substrate is bound by residues Arg261, Lys263, Tyr265, Gln347, and Tyr349.

Belongs to the tryptophan dimethylallyltransferase family. Homodimer.

It catalyses the reaction L-tryptophan + dimethylallyl diphosphate = 4-(3-methylbut-2-enyl)-L-tryptophan + diphosphate. It participates in alkaloid biosynthesis. In terms of biological role, tryptophan dimethylallyltransferase; part of the gene cluster that mediates the biosynthesis of communesins, a prominent class of indole alkaloids with great potential as pharmaceuticals. Communesins are biosynthesized by the coupling of tryptamine and aurantioclavine, two building blocks derived from L-tryptophan. The L-tryptophan decarboxylase cnsB converts L-tryptophan to tryptamine, whereas the tryptophan dimethylallyltransferase cnsF converts L-tryptophan to 4-dimethylallyl tryptophan which is further transformed to aurantioclavine by the aurantioclavine synthase cnsA, probably aided by the catalase cnsD. The cytochrome P450 monooxygenase cnsC catalyzes the heterodimeric coupling between the two different indole moieties, tryptamine and aurantioclavine, to construct vicinal quaternary stereocenters and yield the heptacyclic communesin scaffold. The O-methyltransferase cnsE then methylates the communesin scaffold to produce communesin K, the simplest characterized communesin that contains the heptacyclic core. The dioxygenase cnsJ converts communesin K into communesin I. Acylation to introduce the hexadienyl group at position N16 of communesin I by the acyltransferase cnsK leads to the production of communesin B. The hexadienyl group is produced by the highly reducing polyketide synthase cnsI, before being hydrolytically removed from cnsI by the serine hydrolase cnsH, converted into hexadienyl-CoA by the CoA ligase cnsG, and then transferred to communesin I by cnsK. Surprisingly, cnsK may also be a promiscuous acyltransferase that can tolerate a range of acyl groups, including acetyl-, propionyl-, and butyryl-CoA, which lead to communesins A, G and H respectively. The roles of the alpha-ketoglutarate-dependent dioxygenases cnsM and cnsP have still to be determined. The polypeptide is Tryptophan dimethylallyltransferase cnsF (Penicillium expansum (Blue mold rot fungus)).